Consider the following 136-residue polypeptide: Large ribosomal subunit protein uL16 (136 aa).

It belongs to the universal ribosomal protein uL16 family. In terms of assembly, part of the 50S ribosomal subunit.

Its function is as follows. Binds 23S rRNA and is also seen to make contacts with the A and possibly P site tRNAs. The polypeptide is Large ribosomal subunit protein uL16 (Rickettsia akari (strain Hartford)).